The primary structure comprises 474 residues: uncharacterized protein (474 aa).

The chain crosses the membrane as a helical span at residues 3–23; it reads LTLWLVLGAVGVGAVGTGVGF. The segment at 171 to 296 is disordered; sequence VSDGSSSKTR…KETKDRTKVD (126 aa). Over residues 180–210 the composition is skewed to basic residues; that stretch reads RTPKKTKTSKKKPIKKKSSKSKSSKGSKKQK. Residues 231–253 show a composition bias toward polar residues; that stretch reads TRSQSKQQKGQEQATDQTDSEGV. Residues 257–266 show a composition bias toward acidic residues; the sequence is EGADNTDTEL. Over residues 267–281 the composition is skewed to low complexity; it reads VETTAETTEQEATTK. Over residues 282-296 the composition is skewed to basic and acidic residues; sequence STKDTKETKDRTKVD.

It localises to the membrane. This is an uncharacterized protein from Mycoplasma pneumoniae (strain ATCC 29342 / M129 / Subtype 1) (Mycoplasmoides pneumoniae).